The following is a 118-amino-acid chain: Holo-[acyl-carrier-protein] synthase (118 aa).

2 residues coordinate Mg(2+): aspartate 8 and glutamate 57.

The protein belongs to the P-Pant transferase superfamily. AcpS family. The cofactor is Mg(2+).

Its subcellular location is the cytoplasm. The enzyme catalyses apo-[ACP] + CoA = holo-[ACP] + adenosine 3',5'-bisphosphate + H(+). In terms of biological role, transfers the 4'-phosphopantetheine moiety from coenzyme A to a Ser of acyl-carrier-protein. The protein is Holo-[acyl-carrier-protein] synthase of Pediococcus pentosaceus (strain ATCC 25745 / CCUG 21536 / LMG 10740 / 183-1w).